Reading from the N-terminus, the 534-residue chain is Coiled-coil domain-containing protein 183 (534 aa).

3 coiled-coil regions span residues 10-54 (EAQI…NLRR), 136-209 (DATK…DMTV), and 321-406 (RFLA…LLVI).

The polypeptide is Coiled-coil domain-containing protein 183 (Ccdc183) (Mus musculus (Mouse)).